The following is a 130-amino-acid chain: Putative antitoxin VapB50 (130 aa).

Possibly the antitoxin component of a type II toxin-antitoxin (TA) system. Its cognate toxin is VapC50. This is Putative antitoxin VapB50 from Mycobacterium tuberculosis (strain ATCC 25618 / H37Rv).